The chain runs to 197 residues: OV-16 antigen (197 aa).

Positions 1-16 (MHCLQVVIAIVLYSFG) are cleaved as a signal peptide. Asparagine 56, asparagine 61, asparagine 119, and asparagine 124 each carry an N-linked (GlcNAc...) asparagine glycan.

This sequence belongs to the phosphatidylethanolamine-binding protein family. Hypodermis, cuticle and uterus.

This chain is OV-16 antigen (OV16), found in Onchocerca volvulus.